Here is a 679-residue protein sequence, read N- to C-terminus: UvrABC system protein B (679 aa).

The Helicase ATP-binding domain maps to 25 to 176 (YGVNQGKQYQ…NVRESLRELV (152 aa)). 38 to 45 (GATGTGKT) contributes to the ATP binding site. The short motif at 91 to 114 (YYDYYQPEAYVPVSDTYIAKTSSV) is the Beta-hairpin element. In terms of domain architecture, Helicase C-terminal spans 429–591 (QIDDLLDEIR…IIPKPAGKKP (163 aa)). Residues 639-674 (PEIIDKLEGKMNLAAEELDFEQAAKLRDRIRQLRKK) enclose the UVR domain.

Belongs to the UvrB family. Forms a heterotetramer with UvrA during the search for lesions. Interacts with UvrC in an incision complex.

It localises to the cytoplasm. The UvrABC repair system catalyzes the recognition and processing of DNA lesions. A damage recognition complex composed of 2 UvrA and 2 UvrB subunits scans DNA for abnormalities. Upon binding of the UvrA(2)B(2) complex to a putative damaged site, the DNA wraps around one UvrB monomer. DNA wrap is dependent on ATP binding by UvrB and probably causes local melting of the DNA helix, facilitating insertion of UvrB beta-hairpin between the DNA strands. Then UvrB probes one DNA strand for the presence of a lesion. If a lesion is found the UvrA subunits dissociate and the UvrB-DNA preincision complex is formed. This complex is subsequently bound by UvrC and the second UvrB is released. If no lesion is found, the DNA wraps around the other UvrB subunit that will check the other stand for damage. This is UvrABC system protein B from Prochlorococcus marinus (strain MIT 9211).